Reading from the N-terminus, the 237-residue chain is Lipoprotein-releasing system ATP-binding protein LolD (237 aa).

Residues 8 to 236 (ISVTDLRKTF…EAIKKSVKTA (229 aa)) form the ABC transporter domain. Residue 40-47 (GKSGSGKS) participates in ATP binding.

Belongs to the ABC transporter superfamily. Lipoprotein translocase (TC 3.A.1.125) family. In terms of assembly, the complex is composed of two ATP-binding proteins (LolD) and two transmembrane proteins (LolC and LolE).

The protein localises to the cell inner membrane. Its function is as follows. Part of the ABC transporter complex LolCDE involved in the translocation of mature outer membrane-directed lipoproteins, from the inner membrane to the periplasmic chaperone, LolA. Responsible for the formation of the LolA-lipoprotein complex in an ATP-dependent manner. The protein is Lipoprotein-releasing system ATP-binding protein LolD of Leptospira interrogans serogroup Icterohaemorrhagiae serovar Lai (strain 56601).